Consider the following 475-residue polypeptide: Bifunctional protein HldE (475 aa).

Residues 1 to 318 (MMQYSLKFNQ…ENAIHHREET (318 aa)) form a ribokinase region. Position 195–198 (195–198 (NMAE)) interacts with ATP. Aspartate 264 is an active-site residue. The segment at 344–475 (MTNGCFDILH…DVIKKIQAIR (132 aa)) is cytidylyltransferase.

The protein in the N-terminal section; belongs to the carbohydrate kinase PfkB family. It in the C-terminal section; belongs to the cytidylyltransferase family. Homodimer.

It carries out the reaction D-glycero-beta-D-manno-heptose 7-phosphate + ATP = D-glycero-beta-D-manno-heptose 1,7-bisphosphate + ADP + H(+). The catalysed reaction is D-glycero-beta-D-manno-heptose 1-phosphate + ATP + H(+) = ADP-D-glycero-beta-D-manno-heptose + diphosphate. Its pathway is nucleotide-sugar biosynthesis; ADP-L-glycero-beta-D-manno-heptose biosynthesis; ADP-L-glycero-beta-D-manno-heptose from D-glycero-beta-D-manno-heptose 7-phosphate: step 1/4. The protein operates within nucleotide-sugar biosynthesis; ADP-L-glycero-beta-D-manno-heptose biosynthesis; ADP-L-glycero-beta-D-manno-heptose from D-glycero-beta-D-manno-heptose 7-phosphate: step 3/4. It participates in bacterial outer membrane biogenesis; LOS core biosynthesis. Its function is as follows. Catalyzes the phosphorylation of D-glycero-D-manno-heptose 7-phosphate at the C-1 position to selectively form D-glycero-beta-D-manno-heptose-1,7-bisphosphate. Functionally, catalyzes the ADP transfer from ATP to D-glycero-beta-D-manno-heptose 1-phosphate, yielding ADP-D-glycero-beta-D-manno-heptose. The chain is Bifunctional protein HldE from Haemophilus ducreyi (strain 35000HP / ATCC 700724).